A 670-amino-acid polypeptide reads, in one-letter code: DNA topoisomerase 6 subunit B (670 aa).

Residues 1–30 (MAGDDLVETKKGSSKNSKDSNESKLKQKSP) are disordered. A compositionally biased stretch (basic and acidic residues) spans 7–25 (VETKKGSSKNSKDSNESKL). Residues N60, D160, 181–182 (TK), 190–197 (GKFGLGAK), and K516 contribute to the ATP site.

It belongs to the TOP6B family. Homodimer. Heterotetramer of two TOP6A and two TOP6B subunits. Interacts with SPO11-2, but not with SPO11-1, RHL1 or BIN4. In terms of tissue distribution, highly expressed in leaves, stems, flowers and seedlings.

The protein localises to the nucleus. The catalysed reaction is ATP-dependent breakage, passage and rejoining of double-stranded DNA.. Its function is as follows. Component of the DNA topoisomerase VI involved in chromatin organization and progression of endoreduplication cycles. Relaxes both positive and negative superturns and exhibits a strong decatenase activity. The B subunit binds ATP. Involved in cell-elongation processes. This Arabidopsis thaliana (Mouse-ear cress) protein is DNA topoisomerase 6 subunit B.